Consider the following 94-residue polypeptide: 2S albumin-like cysteine protease inhibitor (94 aa).

Intrachain disulfides connect C12–C35, C36–C82, and C48–C89.

The protein belongs to the 2S seed storage albumins family. Expressed in seeds (at protein level).

Functionally, cysteine protease inhibitor that likely functions in defense against insects by inhibiting cysteine proteases in the midgut of herbivore insects such as C.maculatus. Selectively inhibits cathepsin L, as well as papain, ficin and bromelain with lower efficiency. Shows antitumor activity, inhibiting the growth of prostate cancer cell lines PC3 and DU145, and the gastric cancer cell line Hs746T. No activity against cathepsin B or serine proteases (trypsin, human plasma kallikrein and elastase). This Araucaria angustifolia (Brazilian pine tree) protein is 2S albumin-like cysteine protease inhibitor.